A 354-amino-acid polypeptide reads, in one-letter code: Phenylalanine 4-monooxygenase, chloroplastic (354 aa).

A chloroplast-targeting transit peptide spans M1–R60. Fe cation is bound by residues H229, H234, and E274.

Belongs to the biopterin-dependent aromatic amino acid hydroxylase family. As to quaternary structure, forms monomers. It depends on Fe(2+) as a cofactor.

Its subcellular location is the plastid. The protein localises to the chloroplast. The catalysed reaction is (6R)-L-erythro-5,6,7,8-tetrahydrobiopterin + L-phenylalanine + O2 = (4aS,6R)-4a-hydroxy-L-erythro-5,6,7,8-tetrahydrobiopterin + L-tyrosine. In terms of biological role, catalyzes the hydroxylation of L-phenylalanine to L-tyrosine. Does not seem to be tetrahydropterin-dependent and shows preference for 10-formyltetrahydrofolate as cosubstrate and electron donor. This Pinus taeda (Loblolly pine) protein is Phenylalanine 4-monooxygenase, chloroplastic.